The sequence spans 713 residues: Cyclomaltodextrin glucanotransferase (713 aa).

A signal peptide spans 1–27; sequence MKKQVKWLTSVSMSVGIALGAALPVWA. The interval 28 to 165 is A1; that stretch reads SPDTSVNNKL…NIKVVMDFAP (138 aa). Residues D54, N56, N59, N60, G78, and D80 each coordinate Ca(2+). 127–128 provides a ligand contact to substrate; it reads YW. A Ca(2+)-binding site is contributed by N166. The tract at residues 166–229 is b; sequence NHTNPASSTD…NLYDLADINQ (64 aa). H167 contacts substrate. Residue I217 participates in Ca(2+) binding. 220–223 lines the substrate pocket; sequence NLYD. D226 lines the Ca(2+) pocket. The interval 230-434 is A2; sequence NNNTIDSYLK…LRKSNPALAY (205 aa). Substrate is bound at residue R254. The active-site Nucleophile is D256. Position 259-260 (259-260) interacts with substrate; the sequence is KH. Ca(2+) is bound at residue H260. E285 (proton donor) is an active-site residue. H355, D399, and R403 together coordinate substrate. Positions 435–522 are c; that stretch reads GSTTQRWVNS…GTAVWQYTTT (88 aa). Residues 523-609 are d; that stretch reads ESSPIIGNVG…SAAFNNFNVL (87 aa). The 81-residue stretch at 526–606 folds into the IPT/TIG domain; sequence PIIGNVGPTM…GTTSAAFNNF (81 aa). The CBM20 domain maps to 608 to 713; that stretch reads VLTADQVTVR…VATVTVDWQN (106 aa). The tract at residues 610-713 is e; that stretch reads TADQVTVRFK…VATVTVDWQN (104 aa).

Belongs to the glycosyl hydrolase 13 family. As to quaternary structure, monomer. Ca(2+) serves as cofactor.

It is found in the secreted. It catalyses the reaction Cyclizes part of a (1-&gt;4)-alpha-D-glucan chain by formation of a (1-&gt;4)-alpha-D-glucosidic bond.. This Paenibacillus macerans (Bacillus macerans) protein is Cyclomaltodextrin glucanotransferase.